Reading from the N-terminus, the 648-residue chain is Translation factor GUF1 homolog, mitochondrial (648 aa).

The region spanning 55–247 (ERVRNFSIIA…AVIERIPSPP (193 aa)) is the tr-type G domain. GTP contacts are provided by residues 64-71 (AHVDHGKS), 140-144 (DTPGH), and 194-197 (NKID).

This sequence belongs to the TRAFAC class translation factor GTPase superfamily. Classic translation factor GTPase family. LepA subfamily.

The protein resides in the mitochondrion inner membrane. It carries out the reaction GTP + H2O = GDP + phosphate + H(+). Its function is as follows. Promotes mitochondrial protein synthesis. May act as a fidelity factor of the translation reaction, by catalyzing a one-codon backward translocation of tRNAs on improperly translocated ribosomes. Binds to mitochondrial ribosomes in a GTP-dependent manner. In Oryza sativa subsp. indica (Rice), this protein is Translation factor GUF1 homolog, mitochondrial.